Here is a 113-residue protein sequence, read N- to C-terminus: Gigasin-5 (113 aa).

As to expression, component of the organic matrix of calcified shell layers.

In Magallana gigas (Pacific oyster), this protein is Gigasin-5.